A 1217-amino-acid chain; its full sequence is Sterol 3-beta-glucosyltransferase (1217 aa).

Residues 195–232 (EFVRKYFGISEEETLIGHYTGWLLQEVLIQGNLFITNS) form the GRAM 1 domain. Residues 246–343 (AVVLCGKLKL…WVKCLKKQLF (98 aa)) form the PH domain. In terms of domain architecture, GRAM 2 spans 590 to 656 (AKIKDWFNLH…EDIEGYNEIL (67 aa)). UDP-alpha-D-glucose-binding residues include Ser766, Arg767, Asp769, Asn1042, Ile1072, His1074, His1087, Ser1090, Gly1091, Thr1092, Asp1111, and Gln1112.

Belongs to the glycosyltransferase 28 family.

It is found in the cytoplasm. The protein localises to the membrane. It carries out the reaction a sterol + UDP-alpha-D-glucose = a sterol 3-beta-D-glucoside + UDP + H(+). The catalysed reaction is ergosterol + UDP-alpha-D-glucose = ergosteryl 3-beta-D-glucoside + UDP + H(+). In terms of biological role, sterol glycosyltransferase responsible for the glycosylation of ergosterol to form ergosterol-glucoside. The sequence is that of Sterol 3-beta-glucosyltransferase from Vanderwaltozyma polyspora (strain ATCC 22028 / DSM 70294 / BCRC 21397 / CBS 2163 / NBRC 10782 / NRRL Y-8283 / UCD 57-17) (Kluyveromyces polysporus).